The following is a 332-amino-acid chain: DNA-directed RNA polymerase subunit alpha (332 aa).

An alpha N-terminal domain (alpha-NTD) region spans residues 1–231 (MQTNLLKPKT…EQLAVFAQLD (231 aa)). The interval 252-332 (FDPILLRPVD…NWPPAGLEKR (81 aa)) is alpha C-terminal domain (alpha-CTD).

The protein belongs to the RNA polymerase alpha chain family. In terms of assembly, homodimer. The RNAP catalytic core consists of 2 alpha, 1 beta, 1 beta' and 1 omega subunit. When a sigma factor is associated with the core the holoenzyme is formed, which can initiate transcription.

The enzyme catalyses RNA(n) + a ribonucleoside 5'-triphosphate = RNA(n+1) + diphosphate. Its function is as follows. DNA-dependent RNA polymerase catalyzes the transcription of DNA into RNA using the four ribonucleoside triphosphates as substrates. The chain is DNA-directed RNA polymerase subunit alpha from Delftia acidovorans (strain DSM 14801 / SPH-1).